The sequence spans 909 residues: Myb-like protein Q (909 aa).

Disordered stretches follow at residues 15 to 65, 84 to 149, and 216 to 280; these read TTNN…QQQQ, QQQN…QQIL, and SAPS…KGPW. The span at 17–46 shows a compositional bias: low complexity; sequence NNNSNNNNNNNNNNNNNNNNNNNNNINQNH. Residues 47–56 are compositionally biased toward basic residues; the sequence is QHQHQHHHHQ. Residues 84-126 are compositionally biased toward low complexity; sequence QQQNYGESTTSTSMIPPSITTSLTPLTPTLSSQPQNIQQQQQQ. Basic residues predominate over residues 127–139; it reads QHHHQQQHHHHHQ. Over residues 216-226 the composition is skewed to polar residues; it reads SAPSTPLSMSP. HTH myb-type domains follow at residues 272–327 and 328–378; these read SPGI…SPEV and RKTN…LKKI. 2 DNA-binding regions (H-T-H motif) span residues 300–323 and 351–374; these read WSSI…FNHL and WTAI…NSTL. Positions 379–389 are enriched in basic and acidic residues; it reads GGDSKSLNKEK. 5 disordered regions span residues 379 to 482, 497 to 531, 616 to 642, 672 to 748, and 826 to 855; these read GGDS…NTAI, QTTP…QTQQ, SMEQ…QQQQ, YQQQ…HPIE, and LNTT…IPTP. The segment covering 390 to 401 has biased composition (acidic residues); it reads DDDDDDDEDAED. Composition is skewed to low complexity over residues 415-431 and 444-482; these read SSSS…TNSS and STTT…NTAI. Residues 497 to 508 are compositionally biased toward polar residues; the sequence is QTTPNSSPSLSS. 4 stretches are compositionally biased toward low complexity: residues 622–642, 672–726, 733–744, and 826–851; these read YQQQ…QQQQ, NSNNTDTTFSNS, and LNTT…NNNN.

It is found in the nucleus. The protein is Myb-like protein Q (mybQ) of Dictyostelium discoideum (Social amoeba).